A 268-amino-acid chain; its full sequence is Thiazole synthase (268 aa).

The active-site Schiff-base intermediate with DXP is lysine 100. Residues glycine 161, 187–188, and 209–210 contribute to the 1-deoxy-D-xylulose 5-phosphate site; these read AG and NT. The segment at 248-268 is disordered; sequence ASPSSPAEGMFTGTQHPAANS. Residues 259–268 show a composition bias toward polar residues; it reads TGTQHPAANS.

Belongs to the ThiG family. As to quaternary structure, homotetramer. Forms heterodimers with either ThiH or ThiS.

Its subcellular location is the cytoplasm. It catalyses the reaction [ThiS sulfur-carrier protein]-C-terminal-Gly-aminoethanethioate + 2-iminoacetate + 1-deoxy-D-xylulose 5-phosphate = [ThiS sulfur-carrier protein]-C-terminal Gly-Gly + 2-[(2R,5Z)-2-carboxy-4-methylthiazol-5(2H)-ylidene]ethyl phosphate + 2 H2O + H(+). It participates in cofactor biosynthesis; thiamine diphosphate biosynthesis. In terms of biological role, catalyzes the rearrangement of 1-deoxy-D-xylulose 5-phosphate (DXP) to produce the thiazole phosphate moiety of thiamine. Sulfur is provided by the thiocarboxylate moiety of the carrier protein ThiS. In vitro, sulfur can be provided by H(2)S. The polypeptide is Thiazole synthase (Nitrosomonas europaea (strain ATCC 19718 / CIP 103999 / KCTC 2705 / NBRC 14298)).